Here is a 246-residue protein sequence, read N- to C-terminus: 14-3-3 protein eta (246 aa).

Glycine 2 is subject to N-acetylglycine. Residues serine 25 and serine 59 each carry the phosphoserine modification.

It belongs to the 14-3-3 family. As to quaternary structure, homodimer. Interacts with many nuclear hormone receptors and cofactors including AR, ESR1, ESR2, MC2R, NR3C1, NRIP1, PPARBP and THRA. Interacts with ABL1 (phosphorylated form); the interaction retains it in the cytoplasm. Weakly interacts with CDKN1B. Interacts with ARHGEF28 and CDK16. Interacts with GAB2. Interacts with KCNK18 in a phosphorylation-dependent manner. Interacts with SAMSN1. Interacts with the 'Ser-241' phosphorylated form of PDPK1. Interacts with the 'Thr-369' phosphorylated form of DAPK2. Interacts with PI4KB, TBC1D22A and TBC1D22B. Interacts with SLITRK1. Interacts with MEFV. Phosphorylated on Ser-59 by protein kinase C delta type catalytic subunit in a sphingosine-dependent fashion.

The protein resides in the cytoplasm. Adapter protein implicated in the regulation of a large spectrum of both general and specialized signaling pathways. Binds to a large number of partners, usually by recognition of a phosphoserine or phosphothreonine motif. Binding generally results in the modulation of the activity of the binding partner. Negatively regulates the kinase activity of PDPK1. The protein is 14-3-3 protein eta (YWHAH) of Bos taurus (Bovine).